The following is a 177-amino-acid chain: Bifunctional protein PyrR (177 aa).

A PRPP-binding motif is present at residues 99–111 (VVLVDDVIYKGRT).

It belongs to the purine/pyrimidine phosphoribosyltransferase family. PyrR subfamily.

The enzyme catalyses UMP + diphosphate = 5-phospho-alpha-D-ribose 1-diphosphate + uracil. Regulates the transcription of the pyrimidine nucleotide (pyr) operon in response to exogenous pyrimidines. Its function is as follows. Also displays a weak uracil phosphoribosyltransferase activity which is not physiologically significant. This chain is Bifunctional protein PyrR, found in Gloeothece citriformis (strain PCC 7424) (Cyanothece sp. (strain PCC 7424)).